We begin with the raw amino-acid sequence, 81 residues long: Photosystem I iron-sulfur center (81 aa).

2 4Fe-4S ferredoxin-type domains span residues 2 to 31 and 39 to 68; these read SHSV…MIPW and IAPA…VRVY. 8 residues coordinate [4Fe-4S] cluster: C11, C14, C17, C21, C48, C51, C54, and C58.

The eukaryotic PSI reaction center is composed of at least 11 subunits. [4Fe-4S] cluster serves as cofactor.

The protein localises to the plastid. It is found in the chloroplast thylakoid membrane. It catalyses the reaction reduced [plastocyanin] + hnu + oxidized [2Fe-2S]-[ferredoxin] = oxidized [plastocyanin] + reduced [2Fe-2S]-[ferredoxin]. Apoprotein for the two 4Fe-4S centers FA and FB of photosystem I (PSI); essential for photochemical activity. FB is the terminal electron acceptor of PSI, donating electrons to ferredoxin. The C-terminus interacts with PsaA/B/D and helps assemble the protein into the PSI complex. Required for binding of PsaD and PsaE to PSI. PSI is a plastocyanin-ferredoxin oxidoreductase, converting photonic excitation into a charge separation, which transfers an electron from the donor P700 chlorophyll pair to the spectroscopically characterized acceptors A0, A1, FX, FA and FB in turn. This chain is Photosystem I iron-sulfur center, found in Drimys granadensis.